A 421-amino-acid chain; its full sequence is MFSFFRRKKKQETPALEEAQIQETAAKAESELAQIVENIKEDAESLAESVKGQVESAVETVSGAVEQVKETVAEMLSEAEEAAEKAAEQVEAAKEAVAETVGEAVGQVQEAVATTEEHKLGWAARLKQGLTKSRDKMAKSLAGVFGGGQIDEDLYEELETVLITSDMGMEATEYLMKDVRDRVSLKGLKDGNELRGALKEALYDLIKPLEKPLVLPETKEPFVIMLAGINGAGKTTSIGKLAKYFQAQGKSVLLAAGDTFRAAAREQLQAWGERNNVTVISQTTGDSAAVCFDAVQAAKARGIDIVLADTAGRLPTQLHLMEEIKKVKRVLQKAMPDAPHEIIVVLDANIGQNAVNQVKAFDDALGLTGLIVTKLDGTAKGGILAALASDRPVPVRYIGVGEGIDDLRPFDARAFVDALLD.

Residues 228-235 (GINGAGKT), 309-313 (DTAGR), and 373-376 (TKLD) each bind GTP.

The protein belongs to the GTP-binding SRP family. FtsY subfamily. As to quaternary structure, part of the signal recognition particle protein translocation system, which is composed of SRP and FtsY. SRP is a ribonucleoprotein composed of Ffh and a 4.5S RNA molecule.

It is found in the cell inner membrane. The protein resides in the cytoplasm. The catalysed reaction is GTP + H2O = GDP + phosphate + H(+). Involved in targeting and insertion of nascent membrane proteins into the cytoplasmic membrane. Acts as a receptor for the complex formed by the signal recognition particle (SRP) and the ribosome-nascent chain (RNC). Interaction with SRP-RNC leads to the transfer of the RNC complex to the Sec translocase for insertion into the membrane, the hydrolysis of GTP by both Ffh and FtsY, and the dissociation of the SRP-FtsY complex into the individual components. In Neisseria meningitidis serogroup B (strain ATCC BAA-335 / MC58), this protein is Signal recognition particle receptor FtsY.